Reading from the N-terminus, the 228-residue chain is Urease accessory protein UreF (228 aa).

This sequence belongs to the UreF family. UreD, UreF and UreG form a complex that acts as a GTP-hydrolysis-dependent molecular chaperone, activating the urease apoprotein by helping to assemble the nickel containing metallocenter of UreC. The UreE protein probably delivers the nickel.

It is found in the cytoplasm. In terms of biological role, required for maturation of urease via the functional incorporation of the urease nickel metallocenter. This Prochlorococcus marinus (strain AS9601) protein is Urease accessory protein UreF.